We begin with the raw amino-acid sequence, 39 residues long: Larval cuticle protein SC6 (39 aa).

A Chitin-binding type R&amp;R domain is found at valine 15–aspartate 39.

Component of the cuticle of the larva of flesh fly. The sequence is that of Larval cuticle protein SC6 from Sarcophaga bullata (Grey flesh fly).